The following is a 111-amino-acid chain: Resistin-like alpha (111 aa).

Positions 1 to 23 (MKTATCSLLICVFLLQLMVPVNT) are cleaved as a signal peptide. 5 disulfides stabilise this stretch: Cys55-Cys108, Cys67-Cys107, Cys76-Cys93, Cys78-Cys95, and Cys82-Cys97.

It belongs to the resistin/FIZZ family. In terms of assembly, monomer. In terms of tissue distribution, highest levels in adipose tissue.

The protein resides in the secreted. Functionally, probable hormone. Plays a role in pulmonary vascular remodeling. The protein is Resistin-like alpha (Retnla) of Rattus norvegicus (Rat).